The sequence spans 263 residues: Shikimate dehydrogenase (NADP(+)) (263 aa).

Shikimate contacts are provided by residues 14–16 (SLS) and T60. K64 functions as the Proton acceptor in the catalytic mechanism. The shikimate site is built by N85 and D100. Residues 123-127 (GAGGA), 146-151 (NRTPQR), and L205 each bind NADP(+). Y207 contributes to the shikimate binding site. G228 contacts NADP(+). Q235 lines the shikimate pocket.

It belongs to the shikimate dehydrogenase family. As to quaternary structure, homodimer.

The enzyme catalyses shikimate + NADP(+) = 3-dehydroshikimate + NADPH + H(+). It participates in metabolic intermediate biosynthesis; chorismate biosynthesis; chorismate from D-erythrose 4-phosphate and phosphoenolpyruvate: step 4/7. Its function is as follows. Involved in the biosynthesis of the chorismate, which leads to the biosynthesis of aromatic amino acids. Catalyzes the reversible NADPH linked reduction of 3-dehydroshikimate (DHSA) to yield shikimate (SA). The polypeptide is Shikimate dehydrogenase (NADP(+)) (Thermus thermophilus (strain ATCC 27634 / DSM 579 / HB8)).